A 124-amino-acid polypeptide reads, in one-letter code: Probable 5-hydroxyisourate hydrolase (124 aa).

Substrate is bound by residues H16, R57, and Y121.

It belongs to the transthyretin family. 5-hydroxyisourate hydrolase subfamily. As to quaternary structure, homotetramer.

The enzyme catalyses 5-hydroxyisourate + H2O = 5-hydroxy-2-oxo-4-ureido-2,5-dihydro-1H-imidazole-5-carboxylate + H(+). Its function is as follows. Catalyzes the hydrolysis of 5-hydroxyisourate (HIU) to 2-oxo-4-hydroxy-4-carboxy-5-ureidoimidazoline (OHCU). The chain is Probable 5-hydroxyisourate hydrolase from Schizosaccharomyces pombe (strain 972 / ATCC 24843) (Fission yeast).